Here is a 394-residue protein sequence, read N- to C-terminus: NAD(P)H-quinone oxidoreductase subunit H (394 aa).

It belongs to the complex I 49 kDa subunit family. In terms of assembly, NDH-1 can be composed of about 15 different subunits; different subcomplexes with different compositions have been identified which probably have different functions.

It is found in the cellular thylakoid membrane. It catalyses the reaction a plastoquinone + NADH + (n+1) H(+)(in) = a plastoquinol + NAD(+) + n H(+)(out). The enzyme catalyses a plastoquinone + NADPH + (n+1) H(+)(in) = a plastoquinol + NADP(+) + n H(+)(out). Its function is as follows. NDH-1 shuttles electrons from an unknown electron donor, via FMN and iron-sulfur (Fe-S) centers, to quinones in the respiratory and/or the photosynthetic chain. The immediate electron acceptor for the enzyme in this species is believed to be plastoquinone. Couples the redox reaction to proton translocation, and thus conserves the redox energy in a proton gradient. Cyanobacterial NDH-1 also plays a role in inorganic carbon-concentration. The protein is NAD(P)H-quinone oxidoreductase subunit H of Synechococcus sp. (strain CC9311).